A 334-amino-acid chain; its full sequence is Ribosomal RNA small subunit methyltransferase H (334 aa).

A disordered region spans residues 1–21 (MNALPIRTAAPSGHSGGHSST). Residues 52-54 (GGY), Asp71, Phe98, Asp119, and Gln126 contribute to the S-adenosyl-L-methionine site.

It belongs to the methyltransferase superfamily. RsmH family.

It localises to the cytoplasm. It carries out the reaction cytidine(1402) in 16S rRNA + S-adenosyl-L-methionine = N(4)-methylcytidine(1402) in 16S rRNA + S-adenosyl-L-homocysteine + H(+). In terms of biological role, specifically methylates the N4 position of cytidine in position 1402 (C1402) of 16S rRNA. This Granulibacter bethesdensis (strain ATCC BAA-1260 / CGDNIH1) protein is Ribosomal RNA small subunit methyltransferase H.